Reading from the N-terminus, the 142-residue chain is Snaclec 2 (142 aa).

An N-terminal signal peptide occupies residues 1–23; the sequence is MGRFIFVSFSLLVVFLSLSGTGA. Residues C25 and C36 are joined by a disulfide bond. The C-type lectin domain maps to 32 to 139; that stretch reads YEGHCYRVFQ…CSETHNVICK (108 aa). The N-linked (GlcNAc...) asparagine glycan is linked to N43. Intrachain disulfides connect C53–C138 and C115–C130.

Belongs to the snaclec family. Heterodimer; disulfide-linked. As to expression, expressed by the venom gland.

Its subcellular location is the secreted. Its function is as follows. Interferes with one step of hemostasis (modulation of platelet aggregation, or coagulation cascade, for example). This is Snaclec 2 from Sistrurus catenatus edwardsii (Desert massasauga).